The following is a 533-amino-acid chain: Beta-1,4 N-acetylgalactosaminyltransferase 1 (533 aa).

At 1 to 7 (MRLDRRA) the chain is on the cytoplasmic side. A helical; Signal-anchor for type II membrane protein membrane pass occupies residues 8-25 (LYALVLLLACASLGLLYS). The Lumenal portion of the chain corresponds to 26-533 (STRNAPSLPN…KHRLQCMTAE (508 aa)). N-linked (GlcNAc...) asparagine glycans are attached at residues Asn-79, Asn-179, and Asn-274. A disulfide bond links Cys-429 and Cys-476.

Belongs to the glycosyltransferase 2 family. As to quaternary structure, homodimer; disulfide-linked. As to expression, most abundant in brain, liver, lung, spleen and testis.

The protein localises to the golgi apparatus membrane. It carries out the reaction a ganglioside GM3 (d18:1(4E)) + UDP-N-acetyl-alpha-D-galactosamine = a ganglioside GM2 (d18:1(4E)) + UDP + H(+). The catalysed reaction is a ganglioside GD3 (d18:1(4E)) + UDP-N-acetyl-alpha-D-galactosamine = a ganglioside GD2 (d18:1(4E)) + UDP + H(+). It catalyses the reaction a ganglioside GM3 + UDP-N-acetyl-alpha-D-galactosamine = a ganglioside GM2 + UDP + H(+). The enzyme catalyses a ganglioside GD3 + UDP-N-acetyl-alpha-D-galactosamine = a ganglioside GD2 + UDP + H(+). It carries out the reaction a ganglioside GD1a + UDP-N-acetyl-alpha-D-galactosamine = a ganglioside GalNAc-GD1a + UDP + H(+). The catalysed reaction is a ganglioside GT3 (d18:1(4E)) + UDP-N-acetyl-alpha-D-galactosamine = a ganglioside GT2 (d18:1(4E)) + UDP + H(+). It catalyses the reaction a beta-D-Gal-(1-&gt;4)-beta-D-Glc-(1&lt;-&gt;1)-Cer(d18:1(4E)) + UDP-N-acetyl-alpha-D-galactosamine = a ganglioside GA2 (d18:1(4E)) + UDP + H(+). The enzyme catalyses a neolactoside IV(3)-alpha-NeuGc-nLc4Cer + UDP-N-acetyl-alpha-D-galactosamine = a neolactoside IV(4)-beta-GalNAc-IV(3)-alpha-NeuGc-nLc4Cer + UDP + H(+). Its pathway is sphingolipid metabolism. Functionally, involved in the biosynthesis of gangliosides GM2, GD2 and GA2. Involved in the biosynthesis of gangliosides GM2, GD2, GT2 and GA2 from GM3, GD3, GT3 and GA3, respectively. This chain is Beta-1,4 N-acetylgalactosaminyltransferase 1, found in Mus musculus (Mouse).